The primary structure comprises 429 residues: Ribosomal RNA small subunit methyltransferase B (429 aa).

S-adenosyl-L-methionine is bound by residues 254–260 (CAAPGGK), Asp277, Asp303, and Asp322. Residue Cys375 is the Nucleophile of the active site.

The protein belongs to the class I-like SAM-binding methyltransferase superfamily. RsmB/NOP family.

It is found in the cytoplasm. The enzyme catalyses cytidine(967) in 16S rRNA + S-adenosyl-L-methionine = 5-methylcytidine(967) in 16S rRNA + S-adenosyl-L-homocysteine + H(+). In terms of biological role, specifically methylates the cytosine at position 967 (m5C967) of 16S rRNA. In Escherichia coli O17:K52:H18 (strain UMN026 / ExPEC), this protein is Ribosomal RNA small subunit methyltransferase B.